The chain runs to 540 residues: MPSSSSGNSRHFSRVAPVVLAILDGWGHREEVEHNSIRSAETPIMDALWHAYPHTLIEASGAAVGLPDNQMGNSEVGHLTIGAGRVIRQELVRISETVQAGRLGQTPALIALAERLRKSDGTLHLLGLCSDGGVHSHINHLCGLLHWAAAAGLNKVAVHLITDGRDTPIQSASKYLHQIEDAINASGVGELASLCGRYWAMDRDHRWERTIRAYEVLTDPNQSISRVTAEDVLSASYANGTTDEFLEPTRLSNNYFKDGDGLVMFNFRPDRARQLVQALTLPDFDGFPRANQPSLDVVTFTQYEHDLPVGVAFPAESLDDLLGQVVSEHGLRQYRTAETEKYPHVTYFMNGGIEQPLAGEERHLVPSPRVATYDLAPAMAADTLTESCVNAIESGVYSLVVINYANPDMVGHTGVMGAAQEAISTVDRCIGRLLDSTGRMGGTLLITADHGNAELMQGSDGQAWTAHTTNPVPVILVEGEKRKLAGYGNDIQLREGGGLADIAPTLLQLLDLPKPDAMSGLSLIQAIDSPTPSARLPQPV.

2 residues coordinate Mn(2+): Asp-24 and Ser-74. Ser-74 (phosphoserine intermediate) is an active-site residue. Substrate-binding positions include His-135, 165 to 166 (RD), Arg-197, Arg-203, 268 to 271 (RPDR), and Lys-341. 5 residues coordinate Mn(2+): Asp-408, His-412, Asp-449, His-450, and His-467.

The protein belongs to the BPG-independent phosphoglycerate mutase family. As to quaternary structure, monomer. Mn(2+) serves as cofactor.

It carries out the reaction (2R)-2-phosphoglycerate = (2R)-3-phosphoglycerate. It participates in carbohydrate degradation; glycolysis; pyruvate from D-glyceraldehyde 3-phosphate: step 3/5. Functionally, catalyzes the interconversion of 2-phosphoglycerate and 3-phosphoglycerate. The protein is 2,3-bisphosphoglycerate-independent phosphoglycerate mutase of Prochlorococcus marinus (strain MIT 9313).